Reading from the N-terminus, the 264-residue chain is S-adenosylmethionine decarboxylase proenzyme (264 aa).

Ser-112 functions as the Schiff-base intermediate with substrate; via pyruvic acid in the catalytic mechanism. Pyruvic acid (Ser); by autocatalysis is present on Ser-112. His-117 serves as the catalytic Proton acceptor; for processing activity. Catalysis depends on Cys-140, which acts as the Proton donor; for catalytic activity.

This sequence belongs to the prokaryotic AdoMetDC family. Type 2 subfamily. Heterooctamer of four alpha and four beta chains arranged as a tetramer of alpha/beta heterodimers. Pyruvate serves as cofactor. Post-translationally, is synthesized initially as an inactive proenzyme. Formation of the active enzyme involves a self-maturation process in which the active site pyruvoyl group is generated from an internal serine residue via an autocatalytic post-translational modification. Two non-identical subunits are generated from the proenzyme in this reaction, and the pyruvate is formed at the N-terminus of the alpha chain, which is derived from the carboxyl end of the proenzyme. The post-translation cleavage follows an unusual pathway, termed non-hydrolytic serinolysis, in which the side chain hydroxyl group of the serine supplies its oxygen atom to form the C-terminus of the beta chain, while the remainder of the serine residue undergoes an oxidative deamination to produce ammonia and the pyruvoyl group blocking the N-terminus of the alpha chain.

It carries out the reaction S-adenosyl-L-methionine + H(+) = S-adenosyl 3-(methylsulfanyl)propylamine + CO2. The protein operates within amine and polyamine biosynthesis; S-adenosylmethioninamine biosynthesis; S-adenosylmethioninamine from S-adenosyl-L-methionine: step 1/1. In terms of biological role, catalyzes the decarboxylation of S-adenosylmethionine to S-adenosylmethioninamine (dcAdoMet), the propylamine donor required for the synthesis of the polyamines spermine and spermidine from the diamine putrescine. This Citrobacter koseri (strain ATCC BAA-895 / CDC 4225-83 / SGSC4696) protein is S-adenosylmethionine decarboxylase proenzyme.